A 562-amino-acid chain; its full sequence is Arginine--tRNA ligase 2 (562 aa).

A 'HIGH' region motif is present at residues 122–132; that stretch reads PNIAKPFSMGH.

This sequence belongs to the class-I aminoacyl-tRNA synthetase family. As to quaternary structure, monomer.

It is found in the cytoplasm. It catalyses the reaction tRNA(Arg) + L-arginine + ATP = L-arginyl-tRNA(Arg) + AMP + diphosphate. This Bacillus anthracis protein is Arginine--tRNA ligase 2 (argS2).